The following is a 197-amino-acid chain: MTDFILNAQARTDLGKGASRRLRHAASIPAVVYGGDKEAQSLTIVAKEIAKLFENEAAYSHVIELNVDGAKQNVVVKAMQRHPAKGFIMHADFVRVVAGQKLTAKVPVHFIGEEAPVKKGGEISHVVSEIEVSCEAKDLPEFIEVDLANAEVGTIIHLSDLKAPKGVEFVALAHGDDKAVANVHAPRVAPEAEGAAE.

Belongs to the bacterial ribosomal protein bL25 family. CTC subfamily. In terms of assembly, part of the 50S ribosomal subunit; part of the 5S rRNA/L5/L18/L25 subcomplex. Contacts the 5S rRNA. Binds to the 5S rRNA independently of L5 and L18.

In terms of biological role, this is one of the proteins that binds to the 5S RNA in the ribosome where it forms part of the central protuberance. This chain is Large ribosomal subunit protein bL25, found in Pseudomonas putida (strain GB-1).